The chain runs to 1254 residues: Structural polyprotein (1254 aa).

Residues 1–33 (MFPFQPMYPMQPMPYRNPFAAPRRPWFPRTDPF) form a necessary for nucleocapsid assembly and virus assembly region. The tract at residues 33-68 (FLAMQVQELTRSMANLTFKQRRDAPPEGPSAKKPKK) is host transcription inhibition. Residues 41 to 48 (LTRSMANL) carry the Supraphysiological nuclear export signal motif. Residues 45–119 (MANLTFKQRR…KKPGKRQRMV (75 aa)) are disordered. Positions 64-68 (KKPKK) match the Nuclear localization signal motif. Residues 80–92 (GKKKKNQGKKKAK) are compositionally biased toward basic residues. The interval 91-127 (AKTGPPNPKAQNGNKKKTNKKPGKRQRMVMKLESDKT) is binding to the viral RNA. 2 positions are modified to phosphothreonine: Thr-93 and Thr-108. Basic residues predominate over residues 104-118 (NKKKTNKKPGKRQRM). Positions 112–126 (PGKRQRMVMKLESDK) are ribosome-binding. Ser-124 bears the Phosphoserine mark. The Peptidase S3 domain maps to 126 to 275 (KTFPIMLEGK…KYTPENCEQW (150 aa)). Thr-127 carries the phosphothreonine modification. Residues His-152, Asp-174, and Ser-226 each act as charge relay system in the active site. Residues 276 to 287 (SLVTTMCLLANV) are functions as an uncleaved signal peptide for the precursor of protein E3/E2. Topologically, residues 276-701 (SLVTTMCLLA…HYYHRYPMST (426 aa)) are extracellular. 3 N-linked (GlcNAc...) asparagine; by host glycosylation sites follow: Asn-286, Asn-546, and Asn-652. A helical membrane pass occupies residues 702 to 722 (ILGLSICAAIATVSVAASTWL). Residues 723 to 757 (FCRSRVACLTPYRLTPNARIPFCLAVLCCARTARA) lie on the Cytoplasmic side of the membrane. S-palmitoyl cysteine; by host attachment occurs at residues Cys-730, Cys-750, and Cys-751. Over 758-772 (ETTWESLDHLWNNNQ) the chain is Extracellular. The helical transmembrane segment at 773 to 793 (QMFWIQLLIPLAALIVVTRLL) threads the bilayer. Over 794–795 (RC) the chain is Cytoplasmic. The helical transmembrane segment at 796–816 (VCCVVPFLVMAGAAAPAYEHA) threads the bilayer. At 817-1224 (TTMPSQAGIS…SKTAWTWLTS (408 aa)) the chain is on the extracellular side. Intrachain disulfides connect Cys-861-Cys-926, Cys-874-Cys-906, Cys-875-Cys-908, and Cys-880-Cys-890. The segment at 896 to 913 (VYPFMWGGAYCFCDTENT) is E1 fusion peptide loop. Residue Asn-946 is glycosylated (N-linked (GlcNAc...) asparagine; by host). Intrachain disulfides connect Cys-1071/Cys-1083, Cys-1113/Cys-1188, Cys-1118/Cys-1192, and Cys-1140/Cys-1182. A helical membrane pass occupies residues 1225–1245 (LLGGSAVIIIIGLVLATIVAM). The Cytoplasmic portion of the chain corresponds to 1246–1254 (YVLTNQKHN).

In terms of assembly, homodimer. Homomultimer. Interacts with host karyopherin KPNA4; this interaction allows the nuclear import of the viral capsid protein. Interacts with spike glycoprotein E2. Interacts with host IRAK1; the interaction leads to inhibition of IRAK1-dependent signaling. Part of a tetrameric complex composed of host CRM1, host importin alpha/beta dimer and the viral capsid; this complex blocks the receptor-mediated transport through the nuclear pore. Interacts with host phosphatase PPP1CA; this interaction dephosphorylates the capsid protein, which increases its ability to bind to the viral genome. The precursor of protein E3/E2 and E1 form a heterodimer shortly after synthesis. As to quaternary structure, interacts with spike glycoprotein E2. The precursor of protein E3/E2 and E1 form a heterodimer shortly after synthesis. Processing of the precursor of protein E3/E2 into E2 and E3 results in a heterodimer of the spike glycoproteins E2 and E1. Spike at virion surface are constituted of three E2-E1 heterodimers. After target cell attachment and endocytosis, E1 change conformation to form homotrimers. Interacts with 6K protein. Interacts (via fusion peptide loop) with host LDLRAD3 (via domain LDL-receptor class A 1); this interaction mediates viral entry to the host cell. 2 adjacent E2-E1 heterodimers in the trimeric spike interact with host LDLRAD3. In terms of assembly, interacts with spike glycoprotein E1. Processing of the precursor of protein E3/E2 into E2 and E3 results in a heterodimer of the spike glycoproteins E2 and E1. Spike at virion surface are constituted of a trimer of E2-E1 heterodimers. Interacts with 6K protein. Interacts with host LDLRAD3 (via domain LDL-receptor class A 1); this interaction mediates viral entry to the host cell. 2 adjacent E2-E1 heterodimers in the trimeric spike interact with host LDLRAD3. Oligomer. Interacts with spike glycoprotein E1. Interacts with spike glycoprotein E2. Structural polyprotein: Specific enzymatic cleavages in vivo yield mature proteins. Capsid protein is auto-cleaved during polyprotein translation, unmasking a signal peptide at the N-terminus of the precursor of E3/E2. The remaining polyprotein is then targeted to the host endoplasmic reticulum, where host signal peptidase cleaves it into pE2, 6K and E1 proteins. pE2 is further processed to mature E3 and E2 by host furin in trans-Golgi vesicle. Post-translationally, phosphorylated on serine and threonine residues. In terms of processing, palmitoylated via thioester bonds. These palmitoylations may induce disruption of the C-terminus transmembrane. This would result in the reorientation of E2 C-terminus from lumenal to cytoplasmic side. N-glycosylated. Post-translationally, palmitoylated via thioester bonds.

It localises to the virion. It is found in the host cytoplasm. The protein resides in the host cell membrane. The protein localises to the host nucleus. Its subcellular location is the virion membrane. The catalysed reaction is Autocatalytic release of the core protein from the N-terminus of the togavirus structural polyprotein by hydrolysis of a -Trp-|-Ser- bond.. Its function is as follows. Forms an icosahedral capsid with a T=4 symmetry composed of 240 copies of the capsid protein surrounded by a lipid membrane through which penetrate 80 spikes composed of trimers of E1-E2 heterodimers. The capsid protein binds to the viral RNA genome at a site adjacent to a ribosome binding site for viral genome translation following genome release. Possesses a protease activity that results in its autocatalytic cleavage from the nascent structural protein. Following its self-cleavage, the capsid protein transiently associates with ribosomes, and within several minutes the protein binds to viral RNA and rapidly assembles into icosahedric core particles. The resulting nucleocapsid eventually associates with the cytoplasmic domain of the spike glycoprotein E2 at the cell membrane, leading to budding and formation of mature virions. In case of infection, new virions attach to target cells and after clathrin-mediated endocytosis their membrane fuses with the host endosomal membrane. This leads to the release of the nucleocapsid into the cytoplasm, followed by an uncoating event necessary for the genomic RNA to become accessible. The uncoating might be triggered by the interaction of capsid proteins with ribosomes. Binding of ribosomes would release the genomic RNA since the same region is genomic RNA-binding and ribosome-binding. Specifically inhibits interleukin-1 receptor-associated kinase 1/IRAK1-dependent signaling during viral entry, representing a means by which the alphaviruses may evade innate immune detection and activation prior to viral gene expression. Inhibits host transcription. Forms a tetrameric complex with XPO1/CRM1 and the nuclear import receptor importin. This complex blocks the central channel of host nuclear pores thereby inhibiting the receptor-mediated nuclear transport and thus the host mRNA and rRNA transcription. The inhibition of transcription is linked to a cytopathic effect on the host cell. Provides the signal sequence for the translocation of the precursor of protein E3/E2 to the host endoplasmic reticulum. Furin-cleaved E3 remains associated with spike glycoprotein E1 and mediates pH protection of the latter during the transport via the secretory pathway. After virion release from the host cell, the assembly protein E3 is gradually released in the extracellular space. Functionally, plays a role in viral attachment to target host cell, by binding to the cell receptor LDLRAD3. Synthesized as a p62 precursor which is processed by furin at the cell membrane just before virion budding, giving rise to E2-E1 heterodimer. The p62-E1 heterodimer is stable, whereas E2-E1 is unstable and dissociate at low pH. p62 is processed at the last step, presumably to avoid E1 fusion activation before its final export to cell surface. E2 C-terminus contains a transitory transmembrane that would be disrupted by palmitoylation, resulting in reorientation of the C-terminal tail from lumenal to cytoplasmic side. This step is critical since E2 C-terminus is involved in budding by interacting with capsid proteins. This release of E2 C-terminus in cytoplasm occurs lately in protein export, and precludes premature assembly of particles at the endoplasmic reticulum membrane. In terms of biological role, acts as a viroporin that participates in virus glycoprotein processing and transport to the plasma membrane, cell permeabilization and budding of viral particles. Disrupts the calcium homeostasis of the cell, probably at the endoplasmic reticulum level. This leads to cytoplasmic calcium elevation. Because of its lipophilic properties, the 6K protein is postulated to influence the selection of lipids that interact with the transmembrane domains of the glycoproteins, which, in turn, affects the deformability of the bilayer required for the extreme curvature that occurs as budding proceeds. Present in low amount in virions, about 3% compared to viral glycoproteins. Its function is as follows. Class II viral fusion protein. Fusion activity is inactive as long as E1 is bound to E2 in mature virion. After virus attachment to cell receptor LDLRAD3 and endocytosis, acidification of the endosome induce dissociation of E1/E2 heterodimer and concomitant trimerization of the E1 subunits. This E1 trimer is fusion active, and promotes release of viral nucleocapsid in cytoplasm after endosome and viral membrane fusion. Efficient fusion requires the presence of cholesterol and sphingolipid in the target membrane. This chain is Structural polyprotein, found in Bos taurus (Bovine).